Reading from the N-terminus, the 587-residue chain is Phosphomethylpyrimidine synthase (587 aa).

The segment at 1–58 is disordered; the sequence is MTPTQNEIHPKHSYSPIRKDGLEVPETEIRLDDSPSGPNEPFRIYRTRGPETNPKQGL. A compositionally biased stretch (basic and acidic residues) spans 17–33; it reads IRKDGLEVPETEIRLDD. Residues Asn-180, Met-209, Tyr-238, His-274, 294-296, 335-338, and Glu-374 contribute to the substrate site; these read SRG and DGLR. Residue His-378 participates in Zn(2+) binding. A substrate-binding site is contributed by Tyr-401. His-442 contributes to the Zn(2+) binding site. [4Fe-4S] cluster-binding residues include Cys-522, Cys-525, and Cys-530.

Belongs to the ThiC family. The cofactor is [4Fe-4S] cluster.

The enzyme catalyses 5-amino-1-(5-phospho-beta-D-ribosyl)imidazole + S-adenosyl-L-methionine = 4-amino-2-methyl-5-(phosphooxymethyl)pyrimidine + CO + 5'-deoxyadenosine + formate + L-methionine + 3 H(+). It functions in the pathway cofactor biosynthesis; thiamine diphosphate biosynthesis. Its function is as follows. Catalyzes the synthesis of the hydroxymethylpyrimidine phosphate (HMP-P) moiety of thiamine from aminoimidazole ribotide (AIR) in a radical S-adenosyl-L-methionine (SAM)-dependent reaction. The polypeptide is Phosphomethylpyrimidine synthase (Corynebacterium glutamicum (strain ATCC 13032 / DSM 20300 / JCM 1318 / BCRC 11384 / CCUG 27702 / LMG 3730 / NBRC 12168 / NCIMB 10025 / NRRL B-2784 / 534)).